Reading from the N-terminus, the 151-residue chain is Decarboxylase nsrE (151 aa).

The region spanning 31-126 (AGMTEEDYHN…VGDHENFADT (96 aa)) is the EthD domain.

This sequence belongs to the tpcK family.

It carries out the reaction atrochrysone carboxylate + H(+) = atrochrysone + CO2. Its pathway is secondary metabolite biosynthesis. Its function is as follows. Decarboxylase; part of the gene cluster that mediates the biosynthesis of the tetrahydroxanthone dimer neosartorin, which exhibits antibacterial activity. The two different monomeric units appear to be synthesized by the same set of enzymes, among which the Baeyer-Villiger monooxygenase nsrF is the key enzyme for the divergence of the biosynthetic routes. The pathway begins with the synthesis of atrochrysone thioester by the polyketide synthase nsrB. The atrochrysone carboxyl ACP thioesterase nsrC then breaks the thioester bond and releases the atrochrysone carboxylic acid from AacuL. Atrochrysone carboxylic acid is decarboxylated by the decarboxylase nsrE, and oxidized by the anthrone oxygenase nsrD to yield emodin. Emodin is then reduced to emodin hydroquinone by the oxidoreductase nsrR. A-ring reduction by the short chain dehydrogenase nsrJ, dehydration by the scytalone dehydratase-like protein nsrI and probable spontaneous re-oxidation, results in overall deoxygenation to chrysophanol. The Baeyer-Villiger monooxygenase nsrF accepts chrysophanol as a substrate to insert one oxygen atom at two different positions to yield the precursors of both monomric units. NsrF is promiscuous/flexible in interacting with the 2 (non methylated and methylated) aromatic rings of chrysophanol, thus diverging the biosynthetic pathway at this point. After the hydrolysis of the lactones, methylesterification by the methyltransferase nsrG yields respectively moniliphenone and 2,2',6'-trihydroxy-4-methyl-6-methoxya-cyldiphenylmethanone. The next steps are the hydroxylation by the FAD-dependent monooxygenase nsrK, followed by isomerization by the monooxygenase nsrQ. The short chain dehydrogenase/reductase nsrO then catalyzes the C-5 ketoreduction to give the xanthone skeleton of blennolide C and 5-acetylblennolide A. The acetyltransferase nsrL has a strict substrate specificity and uses only blennolide A but not blennolide C to yield 5-acetylblennolide A as the single-acetylated product. In the final step of the biosynthesis, the heterodimerization of the 2 xanthones, blennolide C and 5-acetylblennolide A, is catalyzed by the cytochrome P450 monooxygenase nsrP. NsrP can utilize at least three different xanthones as its substrates to perform the dimerization reaction. In Aspergillus novofumigatus (strain IBT 16806), this protein is Decarboxylase nsrE.